The following is a 929-amino-acid chain: Isoleucine--tRNA ligase (929 aa).

Positions 58 to 68 (PYANGDIHIGH) match the 'HIGH' region motif. Glu563 is an L-isoleucyl-5'-AMP binding site. The 'KMSKS' region motif lies at 605–609 (KMSKS). Lys608 serves as a coordination point for ATP. Residues Cys892, Cys895, Cys912, and Cys915 each coordinate Zn(2+).

This sequence belongs to the class-I aminoacyl-tRNA synthetase family. IleS type 1 subfamily. Monomer. The cofactor is Zn(2+).

Its subcellular location is the cytoplasm. It catalyses the reaction tRNA(Ile) + L-isoleucine + ATP = L-isoleucyl-tRNA(Ile) + AMP + diphosphate. In terms of biological role, catalyzes the attachment of isoleucine to tRNA(Ile). As IleRS can inadvertently accommodate and process structurally similar amino acids such as valine, to avoid such errors it has two additional distinct tRNA(Ile)-dependent editing activities. One activity is designated as 'pretransfer' editing and involves the hydrolysis of activated Val-AMP. The other activity is designated 'posttransfer' editing and involves deacylation of mischarged Val-tRNA(Ile). The sequence is that of Isoleucine--tRNA ligase from Neisseria meningitidis serogroup C / serotype 2a (strain ATCC 700532 / DSM 15464 / FAM18).